Consider the following 152-residue polypeptide: UPF0178 protein SAR0734 (152 aa).

Belongs to the UPF0178 family.

This chain is UPF0178 protein SAR0734, found in Staphylococcus aureus (strain MRSA252).